Here is a 374-residue protein sequence, read N- to C-terminus: Beta sliding clamp (374 aa).

The protein belongs to the beta sliding clamp family. As to quaternary structure, forms a ring-shaped head-to-tail homodimer around DNA which binds and tethers DNA polymerases and other proteins to the DNA. The DNA replisome complex has a single clamp-loading complex (3 tau and 1 each of delta, delta', psi and chi subunits) which binds 3 Pol III cores (1 core on the leading strand and 2 on the lagging strand) each with a beta sliding clamp dimer. Additional proteins in the replisome are other copies of gamma, psi and chi, Ssb, DNA helicase and RNA primase.

It localises to the cytoplasm. Confers DNA tethering and processivity to DNA polymerases and other proteins. Acts as a clamp, forming a ring around DNA (a reaction catalyzed by the clamp-loading complex) which diffuses in an ATP-independent manner freely and bidirectionally along dsDNA. Initially characterized for its ability to contact the catalytic subunit of DNA polymerase III (Pol III), a complex, multichain enzyme responsible for most of the replicative synthesis in bacteria; Pol III exhibits 3'-5' exonuclease proofreading activity. The beta chain is required for initiation of replication as well as for processivity of DNA replication. In Helicobacter pylori (strain J99 / ATCC 700824) (Campylobacter pylori J99), this protein is Beta sliding clamp (dnaN).